The primary structure comprises 581 residues: Arginine--tRNA ligase (581 aa).

The short motif at 126-136 (PNLAKEMHVGH) is the 'HIGH' region element.

Belongs to the class-I aminoacyl-tRNA synthetase family. Monomer.

It is found in the cytoplasm. The catalysed reaction is tRNA(Arg) + L-arginine + ATP = L-arginyl-tRNA(Arg) + AMP + diphosphate. This chain is Arginine--tRNA ligase, found in Shewanella sp. (strain ANA-3).